The primary structure comprises 149 residues: Transcriptional repressor NrdR (149 aa).

A zinc finger spans residues Cys3–Cys34. Positions Pro49–Glu139 constitute an ATP-cone domain.

The protein belongs to the NrdR family. The cofactor is Zn(2+).

Negatively regulates transcription of bacterial ribonucleotide reductase nrd genes and operons by binding to NrdR-boxes. The protein is Transcriptional repressor NrdR of Photobacterium profundum (strain SS9).